The primary structure comprises 414 residues: Gamma-glutamyl phosphate reductase (414 aa).

This sequence belongs to the gamma-glutamyl phosphate reductase family.

Its subcellular location is the cytoplasm. The enzyme catalyses L-glutamate 5-semialdehyde + phosphate + NADP(+) = L-glutamyl 5-phosphate + NADPH + H(+). Its pathway is amino-acid biosynthesis; L-proline biosynthesis; L-glutamate 5-semialdehyde from L-glutamate: step 2/2. Its function is as follows. Catalyzes the NADPH-dependent reduction of L-glutamate 5-phosphate into L-glutamate 5-semialdehyde and phosphate. The product spontaneously undergoes cyclization to form 1-pyrroline-5-carboxylate. The sequence is that of Gamma-glutamyl phosphate reductase from Geobacillus kaustophilus (strain HTA426).